The chain runs to 137 residues: Nucleoside diphosphate kinase (137 aa).

Residues Lys-9, Phe-57, Arg-85, Thr-91, Arg-102, and Asn-112 each coordinate ATP. Residue His-115 is the Pros-phosphohistidine intermediate of the active site.

The protein belongs to the NDK family. Homotetramer. The cofactor is Mg(2+).

It localises to the cytoplasm. The catalysed reaction is a 2'-deoxyribonucleoside 5'-diphosphate + ATP = a 2'-deoxyribonucleoside 5'-triphosphate + ADP. It carries out the reaction a ribonucleoside 5'-diphosphate + ATP = a ribonucleoside 5'-triphosphate + ADP. In terms of biological role, major role in the synthesis of nucleoside triphosphates other than ATP. The ATP gamma phosphate is transferred to the NDP beta phosphate via a ping-pong mechanism, using a phosphorylated active-site intermediate. This Nitratiruptor sp. (strain SB155-2) protein is Nucleoside diphosphate kinase.